A 365-amino-acid polypeptide reads, in one-letter code: Chorismate synthase (365 aa).

The NADP(+) site is built by arginine 48 and arginine 54. FMN contacts are provided by residues 125–127 (RSS), 238–239 (NA), glycine 278, 293–297 (KPTSS), and arginine 319.

This sequence belongs to the chorismate synthase family. Homotetramer. FMNH2 is required as a cofactor.

It catalyses the reaction 5-O-(1-carboxyvinyl)-3-phosphoshikimate = chorismate + phosphate. Its pathway is metabolic intermediate biosynthesis; chorismate biosynthesis; chorismate from D-erythrose 4-phosphate and phosphoenolpyruvate: step 7/7. Its function is as follows. Catalyzes the anti-1,4-elimination of the C-3 phosphate and the C-6 proR hydrogen from 5-enolpyruvylshikimate-3-phosphate (EPSP) to yield chorismate, which is the branch point compound that serves as the starting substrate for the three terminal pathways of aromatic amino acid biosynthesis. This reaction introduces a second double bond into the aromatic ring system. The protein is Chorismate synthase of Alteromonas mediterranea (strain DSM 17117 / CIP 110805 / LMG 28347 / Deep ecotype).